Reading from the N-terminus, the 485-residue chain is Ribulose bisphosphate carboxylase large chain (485 aa).

Substrate-binding residues include N124 and T174. Residue K176 is the Proton acceptor of the active site. K178 provides a ligand contact to substrate. Mg(2+) contacts are provided by K202, D204, and E205. N6-carboxylysine is present on K202. Residue H294 is the Proton acceptor of the active site. 3 residues coordinate substrate: R295, H327, and S379.

The protein belongs to the RuBisCO large chain family. Type I subfamily. In terms of assembly, heterohexadecamer of 8 large chains and 8 small chains. The cofactor is Mg(2+).

The catalysed reaction is 2 (2R)-3-phosphoglycerate + 2 H(+) = D-ribulose 1,5-bisphosphate + CO2 + H2O. It carries out the reaction D-ribulose 1,5-bisphosphate + O2 = 2-phosphoglycolate + (2R)-3-phosphoglycerate + 2 H(+). RuBisCO catalyzes two reactions: the carboxylation of D-ribulose 1,5-bisphosphate, the primary event in carbon dioxide fixation, as well as the oxidative fragmentation of the pentose substrate. Both reactions occur simultaneously and in competition at the same active site. The chain is Ribulose bisphosphate carboxylase large chain from Rhodopseudomonas palustris (strain ATCC BAA-98 / CGA009).